We begin with the raw amino-acid sequence, 392 residues long: Chaperone protein DnaJ (392 aa).

One can recognise a J domain in the interval 2–67 (DYYTILGVAK…QKRESYDRYG (66 aa)). The segment at 149 to 227 (GVEKELLVSG…CRGQGRIKDK (79 aa)) adopts a CR-type zinc-finger fold. Zn(2+)-binding residues include Cys-162, Cys-165, Cys-179, Cys-182, Cys-201, Cys-204, Cys-215, and Cys-218. CXXCXGXG motif repeat units follow at residues 162–169 (CDACSGSG), 179–186 (CDRCKGSG), 201–208 (CPDCSGEG), and 215–222 (CSECRGQG).

This sequence belongs to the DnaJ family. Homodimer. The cofactor is Zn(2+).

The protein localises to the cytoplasm. Its function is as follows. Participates actively in the response to hyperosmotic and heat shock by preventing the aggregation of stress-denatured proteins and by disaggregating proteins, also in an autonomous, DnaK-independent fashion. Unfolded proteins bind initially to DnaJ; upon interaction with the DnaJ-bound protein, DnaK hydrolyzes its bound ATP, resulting in the formation of a stable complex. GrpE releases ADP from DnaK; ATP binding to DnaK triggers the release of the substrate protein, thus completing the reaction cycle. Several rounds of ATP-dependent interactions between DnaJ, DnaK and GrpE are required for fully efficient folding. Also involved, together with DnaK and GrpE, in the DNA replication of plasmids through activation of initiation proteins. The chain is Chaperone protein DnaJ from Chlamydia muridarum (strain MoPn / Nigg).